Here is a 707-residue protein sequence, read N- to C-terminus: DNA ligase (707 aa).

A disordered region spans residues 1–23 (MSSKATQDPEAVLAEQSDDATEA). NAD(+) is bound by residues 53–57 (DAEFD), 103–104 (SL), and glutamate 133. The active-site N6-AMP-lysine intermediate is the lysine 135. The NAD(+) site is built by arginine 156, glutamate 196, lysine 315, and lysine 339. Zn(2+) contacts are provided by cysteine 433, cysteine 436, cysteine 452, and cysteine 458. In terms of domain architecture, BRCT spans 622–707 (SIERTLDGLS…LENGPDTPDS (86 aa)).

This sequence belongs to the NAD-dependent DNA ligase family. LigA subfamily. Mg(2+) is required as a cofactor. It depends on Mn(2+) as a cofactor.

The enzyme catalyses NAD(+) + (deoxyribonucleotide)n-3'-hydroxyl + 5'-phospho-(deoxyribonucleotide)m = (deoxyribonucleotide)n+m + AMP + beta-nicotinamide D-nucleotide.. Functionally, DNA ligase that catalyzes the formation of phosphodiester linkages between 5'-phosphoryl and 3'-hydroxyl groups in double-stranded DNA using NAD as a coenzyme and as the energy source for the reaction. It is essential for DNA replication and repair of damaged DNA. The chain is DNA ligase from Mycolicibacterium vanbaalenii (strain DSM 7251 / JCM 13017 / BCRC 16820 / KCTC 9966 / NRRL B-24157 / PYR-1) (Mycobacterium vanbaalenii).